Here is a 243-residue protein sequence, read N- to C-terminus: Retrotransposon Gag-like protein 6 (243 aa).

Positions 1-12 (MVQPRTSKTESP) are enriched in polar residues. Residues 1–22 (MVQPRTSKTESPASAPGASAQM) form a disordered region. A coiled-coil region spans residues 29–69 (LTSLRLTNSALRREASTLRAEKANLTNMLESVMAELTLLRT). 2 disordered regions span residues 84–105 (SAIT…PEPF) and 218–243 (TGSC…GRNL). Positions 85-94 (AITSNGTRPM) are enriched in polar residues.

This sequence belongs to the LDOC1 family. As to expression, widely expressed.

The polypeptide is Retrotransposon Gag-like protein 6 (Mus musculus (Mouse)).